The following is a 133-amino-acid chain: Small ribosomal subunit protein uS8 (133 aa).

The protein belongs to the universal ribosomal protein uS8 family. In terms of assembly, part of the 30S ribosomal subunit. Contacts proteins S5 and S12.

Its function is as follows. One of the primary rRNA binding proteins, it binds directly to 16S rRNA central domain where it helps coordinate assembly of the platform of the 30S subunit. The sequence is that of Small ribosomal subunit protein uS8 from Prochlorococcus marinus (strain MIT 9312).